Here is a 124-residue protein sequence, read N- to C-terminus: Histone H2B (124 aa).

A disordered region spans residues M1 to K33. Residues K6 and K11 each carry the N6-acetyllysine modification. Basic residues predominate over residues A8–V17. S13 is subject to Phosphoserine. N6-acetyllysine is present on residues K14 and K19. An O-linked (GlcNAc) serine glycan is attached at S111. K119 is covalently cross-linked (Glycyl lysine isopeptide (Lys-Gly) (interchain with G-Cter in ubiquitin)).

Belongs to the histone H2B family. In terms of assembly, the nucleosome is a histone octamer containing two molecules each of H2A, H2B, H3 and H4 assembled in one H3-H4 heterotetramer and two H2A-H2B heterodimers. The octamer wraps approximately 147 bp of DNA. Monoubiquitination of Lys-119 by BRE1 gives a specific tag for epigenetic transcriptional activation and is also prerequisite for histone H3 'Lys-4' and 'Lys-79' methylation. In terms of processing, phosphorylated during apoptosis; which facilitates apoptotic chromatin condensation. Post-translationally, glcNAcylation at Ser-111 promotes monoubiquitination of Lys-119. It fluctuates in response to extracellular glucose, and associates with transcribed genes.

The protein resides in the nucleus. It is found in the chromosome. Its function is as follows. Core component of nucleosome. Nucleosomes wrap and compact DNA into chromatin, limiting DNA accessibility to the cellular machineries which require DNA as a template. Histones thereby play a central role in transcription regulation, DNA repair, DNA replication and chromosomal stability. DNA accessibility is regulated via a complex set of post-translational modifications of histones, also called histone code, and nucleosome remodeling. The protein is Histone H2B of Oncorhynchus mykiss (Rainbow trout).